A 160-amino-acid chain; its full sequence is Competence protein ComGD (160 aa).

The helical transmembrane segment at 30–50 threads the bilayer; sequence AFTMLESLLVLGLVSILALGL.

In terms of assembly, the transformation pili are flexible filaments, consisting mainly of the major pilin ComGC and smaller amounts of the minor pilins, including at least ComGD, ComGF and ComGG, and perhaps ComGE. Interacts with ComGE. Interacts with ComGF. Interacts with ComGG.

The protein localises to the cell membrane. It localises to the cell surface. It is found in the fimbrium. Functionally, required for formation of the type IV-like pilus (T4P) that plays a role in transformation. Transformation pili are dynamically extended and retracted, perhaps thereby promoting DNA uptake and transformation. Involved in transformation. Required for DNA binding. In Streptococcus pneumoniae (strain ATCC BAA-255 / R6), this protein is Competence protein ComGD.